The chain runs to 344 residues: Anthranilate phosphoribosyltransferase (344 aa).

Residues Gly84, 87 to 88 (GD), Ser92, 94 to 97 (NIST), 112 to 120 (KHGNRSASG), and Ser124 each bind 5-phospho-alpha-D-ribose 1-diphosphate. Gly84 contributes to the anthranilate binding site. Ser96 serves as a coordination point for Mg(2+). Position 115 (Asn115) interacts with anthranilate. Arg170 contacts anthranilate. 2 residues coordinate Mg(2+): Asp229 and Glu230.

Belongs to the anthranilate phosphoribosyltransferase family. As to quaternary structure, homodimer. Requires Mg(2+) as cofactor.

It carries out the reaction N-(5-phospho-beta-D-ribosyl)anthranilate + diphosphate = 5-phospho-alpha-D-ribose 1-diphosphate + anthranilate. Its pathway is amino-acid biosynthesis; L-tryptophan biosynthesis; L-tryptophan from chorismate: step 2/5. In terms of biological role, catalyzes the transfer of the phosphoribosyl group of 5-phosphorylribose-1-pyrophosphate (PRPP) to anthranilate to yield N-(5'-phosphoribosyl)-anthranilate (PRA). This chain is Anthranilate phosphoribosyltransferase, found in Synechococcus sp. (strain RCC307).